A 297-amino-acid chain; its full sequence is Large ribosomal subunit protein uL18 (297 aa).

An N-acetylglycine modification is found at glycine 2. N6-acetyllysine occurs at positions 5 and 48. Residue serine 185 is modified to Phosphoserine. Lysine 220 carries the N6-acetyllysine; alternate modification. Residue lysine 220 forms a Glycyl lysine isopeptide (Lys-Gly) (interchain with G-Cter in SUMO1); alternate linkage. Residue lysine 220 forms a Glycyl lysine isopeptide (Lys-Gly) (interchain with G-Cter in SUMO2); alternate linkage. The residue at position 232 (threonine 232) is a Phosphothreonine. The tract at residues 253–297 (YEKKPKREVKKKRWNRPKMSLAQKKDRVAQKKASFLRAQERAAES) is disordered. A compositionally biased stretch (basic residues) spans 258 to 268 (KREVKKKRWNR). Phosphoserine is present on serine 272.

Belongs to the universal ribosomal protein uL18 family. As to quaternary structure, component of the large ribosomal subunit (LSU). Part of the 5S RNP complex, which is a LSU subcomplex composed of the 5S RNA, RPL5 and RPL11. Component of a hexameric 5S RNP precursor complex, composed of 5S RNA, RRS1, RPF2/BXDC1, RPL5, RPL11 and HEATR3; this complex acts as a precursor for ribosome assembly. Interacts with isoform 1 of NVL in an ATP-dependent manner. Interacts with RRP1B. Interacts with IPO5, IPO7 and KPNB1; these interactions may be involved in RPL5 nuclear import for the assembly of ribosomal subunits.

Its subcellular location is the cytoplasm. It is found in the nucleus. The protein resides in the nucleolus. Component of the ribosome, a large ribonucleoprotein complex responsible for the synthesis of proteins in the cell. The small ribosomal subunit (SSU) binds messenger RNAs (mRNAs) and translates the encoded message by selecting cognate aminoacyl-transfer RNA (tRNA) molecules. The large subunit (LSU) contains the ribosomal catalytic site termed the peptidyl transferase center (PTC), which catalyzes the formation of peptide bonds, thereby polymerizing the amino acids delivered by tRNAs into a polypeptide chain. The nascent polypeptides leave the ribosome through a tunnel in the LSU and interact with protein factors that function in enzymatic processing, targeting, and the membrane insertion of nascent chains at the exit of the ribosomal tunnel. As part of the 5S RNP/5S ribonucleoprotein particle it is an essential component of the LSU, required for its formation and the maturation of rRNAs. It also couples ribosome biogenesis to p53/TP53 activation. As part of the 5S RNP it accumulates in the nucleoplasm and inhibits MDM2, when ribosome biogenesis is perturbed, mediating the stabilization and the activation of TP53. In Oryctolagus cuniculus (Rabbit), this protein is Large ribosomal subunit protein uL18 (RPL5).